The primary structure comprises 64 residues: Cytochrome c oxidase subunit 2 (64 aa).

The Mitochondrial intermembrane portion of the chain corresponds to 1–14; it reads MAHPSQLGFQDAAS. A helical transmembrane segment spans residues 15 to 45; it reads PMMEELLHFHDHALMVVFLISTFVLYIILTM. The Mitochondrial matrix portion of the chain corresponds to 46–64; it reads LTTKLTDKLILESHEIEII.

This sequence belongs to the cytochrome c oxidase subunit 2 family. As to quaternary structure, component of the cytochrome c oxidase (complex IV, CIV), a multisubunit enzyme composed of 14 subunits. The complex is composed of a catalytic core of 3 subunits MT-CO1, MT-CO2 and MT-CO3, encoded in the mitochondrial DNA, and 11 supernumerary subunits COX4I, COX5A, COX5B, COX6A, COX6B, COX6C, COX7A, COX7B, COX7C, COX8 and NDUFA4, which are encoded in the nuclear genome. The complex exists as a monomer or a dimer and forms supercomplexes (SCs) in the inner mitochondrial membrane with NADH-ubiquinone oxidoreductase (complex I, CI) and ubiquinol-cytochrome c oxidoreductase (cytochrome b-c1 complex, complex III, CIII), resulting in different assemblies (supercomplex SCI(1)III(2)IV(1) and megacomplex MCI(2)III(2)IV(2)). Found in a complex with TMEM177, COA6, COX18, COX20, SCO1 and SCO2. Interacts with TMEM177 in a COX20-dependent manner. Interacts with COX20. Interacts with COX16. It depends on Cu cation as a cofactor.

Its subcellular location is the mitochondrion inner membrane. It catalyses the reaction 4 Fe(II)-[cytochrome c] + O2 + 8 H(+)(in) = 4 Fe(III)-[cytochrome c] + 2 H2O + 4 H(+)(out). Its function is as follows. Component of the cytochrome c oxidase, the last enzyme in the mitochondrial electron transport chain which drives oxidative phosphorylation. The respiratory chain contains 3 multisubunit complexes succinate dehydrogenase (complex II, CII), ubiquinol-cytochrome c oxidoreductase (cytochrome b-c1 complex, complex III, CIII) and cytochrome c oxidase (complex IV, CIV), that cooperate to transfer electrons derived from NADH and succinate to molecular oxygen, creating an electrochemical gradient over the inner membrane that drives transmembrane transport and the ATP synthase. Cytochrome c oxidase is the component of the respiratory chain that catalyzes the reduction of oxygen to water. Electrons originating from reduced cytochrome c in the intermembrane space (IMS) are transferred via the dinuclear copper A center (CU(A)) of subunit 2 and heme A of subunit 1 to the active site in subunit 1, a binuclear center (BNC) formed by heme A3 and copper B (CU(B)). The BNC reduces molecular oxygen to 2 water molecules using 4 electrons from cytochrome c in the IMS and 4 protons from the mitochondrial matrix. This Geophagus steindachneri (Red hump earth eater) protein is Cytochrome c oxidase subunit 2 (mt-co2).